The following is a 254-amino-acid chain: Alcohol dehydrogenase 2 (254 aa).

An NAD(+)-binding site is contributed by 10-33 (FVAGLGGIGLDTSREIVKSGPKNL). Serine 138 contacts substrate. Tyrosine 151 functions as the Proton acceptor in the catalytic mechanism.

This sequence belongs to the short-chain dehydrogenases/reductases (SDR) family. In terms of assembly, homodimer.

It carries out the reaction a primary alcohol + NAD(+) = an aldehyde + NADH + H(+). The enzyme catalyses a secondary alcohol + NAD(+) = a ketone + NADH + H(+). This Drosophila montana (Fruit fly) protein is Alcohol dehydrogenase 2 (Adh2).